The chain runs to 85 residues: NAD(P)H-quinone oxidoreductase subunit O (85 aa).

It belongs to the complex I NdhO subunit family. As to quaternary structure, NDH-1 can be composed of about 15 different subunits; different subcomplexes with different compositions have been identified which probably have different functions.

It is found in the cellular thylakoid membrane. The catalysed reaction is a plastoquinone + NADH + (n+1) H(+)(in) = a plastoquinol + NAD(+) + n H(+)(out). It carries out the reaction a plastoquinone + NADPH + (n+1) H(+)(in) = a plastoquinol + NADP(+) + n H(+)(out). Its function is as follows. NDH-1 shuttles electrons from an unknown electron donor, via FMN and iron-sulfur (Fe-S) centers, to quinones in the respiratory and/or the photosynthetic chain. The immediate electron acceptor for the enzyme in this species is believed to be plastoquinone. Couples the redox reaction to proton translocation, and thus conserves the redox energy in a proton gradient. Cyanobacterial NDH-1 also plays a role in inorganic carbon-concentration. The sequence is that of NAD(P)H-quinone oxidoreductase subunit O from Synechococcus sp. (strain CC9311).